The primary structure comprises 283 residues: Thymidylate synthase (283 aa).

Residue Arg22 participates in dUMP binding. Cys160 serves as the catalytic Nucleophile. Residues 180–183, Asn191, and 221–223 each bind dUMP; these read RSCD and HIY. Residue Asp183 coordinates (6R)-5,10-methylene-5,6,7,8-tetrahydrofolate. Ser282 provides a ligand contact to (6R)-5,10-methylene-5,6,7,8-tetrahydrofolate.

It belongs to the thymidylate synthase family. Bacterial-type ThyA subfamily. In terms of assembly, homodimer.

The protein localises to the cytoplasm. The enzyme catalyses dUMP + (6R)-5,10-methylene-5,6,7,8-tetrahydrofolate = 7,8-dihydrofolate + dTMP. Its pathway is pyrimidine metabolism; dTTP biosynthesis. In terms of biological role, catalyzes the reductive methylation of 2'-deoxyuridine-5'-monophosphate (dUMP) to 2'-deoxythymidine-5'-monophosphate (dTMP) while utilizing 5,10-methylenetetrahydrofolate (mTHF) as the methyl donor and reductant in the reaction, yielding dihydrofolate (DHF) as a by-product. This enzymatic reaction provides an intracellular de novo source of dTMP, an essential precursor for DNA biosynthesis. This is Thymidylate synthase from Photobacterium profundum (strain SS9).